A 476-amino-acid chain; its full sequence is Ribulose bisphosphate carboxylase/oxygenase activase 1, chloroplastic (476 aa).

The N-terminal 56 residues, 1-56, are a transit peptide targeting the chloroplast; that stretch reads MAAAYSTVGAVNRAPLSLNGSGARASLVPSTAFFGSSLKKSAAKFPKASSGNFKIV. 165-172 is a binding site for ATP; sequence GGKGQGKS.

It belongs to the RuBisCO activase family.

The protein resides in the plastid. It localises to the chloroplast stroma. Activation of RuBisCO (ribulose-1,5-bisphosphate carboxylase/oxygenase; EC 4.1.1.39) involves the ATP-dependent carboxylation of the epsilon-amino group of lysine leading to a carbamate structure. This is Ribulose bisphosphate carboxylase/oxygenase activase 1, chloroplastic (RCA1) from Larrea tridentata (Creosote bush).